We begin with the raw amino-acid sequence, 379 residues long: Succinyl-diaminopimelate desuccinylase (379 aa).

His-70 contacts Zn(2+). Asp-72 is a catalytic residue. Position 103 (Asp-103) interacts with Zn(2+). Glu-137 functions as the Proton acceptor in the catalytic mechanism. Zn(2+) contacts are provided by Glu-138, Glu-166, and His-352.

The protein belongs to the peptidase M20A family. DapE subfamily. Homodimer. It depends on Zn(2+) as a cofactor. Requires Co(2+) as cofactor.

It carries out the reaction N-succinyl-(2S,6S)-2,6-diaminopimelate + H2O = (2S,6S)-2,6-diaminopimelate + succinate. Its pathway is amino-acid biosynthesis; L-lysine biosynthesis via DAP pathway; LL-2,6-diaminopimelate from (S)-tetrahydrodipicolinate (succinylase route): step 3/3. In terms of biological role, catalyzes the hydrolysis of N-succinyl-L,L-diaminopimelic acid (SDAP), forming succinate and LL-2,6-diaminopimelate (DAP), an intermediate involved in the bacterial biosynthesis of lysine and meso-diaminopimelic acid, an essential component of bacterial cell walls. The sequence is that of Succinyl-diaminopimelate desuccinylase from Burkholderia cenocepacia (strain HI2424).